Consider the following 265-residue polypeptide: Capsule polysaccharide export inner-membrane protein BexB (265 aa).

The next 6 membrane-spanning stretches (helical) occupy residues 37 to 57, 64 to 84, 118 to 138, 151 to 171, 178 to 198, and 235 to 255; these read IGFF…VMMW, KFST…AMMW, LLEV…LVMI, LIAW…ICAI, FGKI…AFFF, and ESIG…LVMV. Positions 37-258 constitute an ABC transmembrane type-2 domain; it reads IGFFWLFVEP…LLGLVMVKNF (222 aa).

This sequence belongs to the ABC-2 integral membrane protein family.

It localises to the cell inner membrane. Functionally, may form an ATP-driven capsule polysaccharide export apparatus, in association with the BexA, BexC and BexD proteins. The sequence is that of Capsule polysaccharide export inner-membrane protein BexB (bexB) from Haemophilus influenzae.